We begin with the raw amino-acid sequence, 108 residues long: Anthranilate 1,2-dioxygenase ferredoxin subunit (108 aa).

The Rieske domain maps to 9–105 (WHPLGAIDEF…IRIVDGQVEV (97 aa)). Residues C49, H51, C68, and H71 each coordinate [2Fe-2S] cluster.

Belongs to the bacterial ring-hydroxylating dioxygenase ferredoxin component family. Part of a multicomponent enzyme system composed of a reductase (AndAa), a ferredoxin (AndAb) and a two-subunit oxygenase component (AndAc and AndAd). [2Fe-2S] cluster is required as a cofactor.

It participates in aromatic compound metabolism; anthranilate degradation via hydroxylation; catechol from anthranilate: step 1/1. Its function is as follows. Part of the multicomponent anthranilate dioxygenase, that converts anthranilate to catechol. This protein seems to be a 2Fe-2S ferredoxin. The polypeptide is Anthranilate 1,2-dioxygenase ferredoxin subunit (Burkholderia cepacia (Pseudomonas cepacia)).